Consider the following 704-residue polypeptide: Urea-proton symporter DUR3 (704 aa).

15 consecutive transmembrane segments (helical) span residues 39 to 59 (YAVILGFGAFFAVFTSFLVWL), 80 to 100 (VKTGLIASVIVSQWTWAATIL), 115 to 135 (FWYASGATIQVLLFGVMAIEI), 159 to 179 (IVFLVFCLATNVVVTAMLLLG), 192 to 212 (LYAASFLIPLGVVVYTLAGGL), 216 to 236 (FLASYVHSVIVHVALVVFVFL), 291 to 311 (SSGGAVFGLINIVGNFGTVFV), 336 to 356 (LVWFAVPFSLATSLGLGALAL), 388 to 408 (LTMLFMAVTSAGSSELIAVSS), 435 to 455 (AVLGFGCFMGILAVVLNKAGV), 461 to 481 (YLAMGVLIGSAVIPIAFMLLW), 486 to 506 (AFGAILGATSGCVFGIITWLT), 527 to 547 (LAGNLVAILTGGLIHAVCSLV), 590 to 610 (AWIVKWGLVFTILIVVIWPVL), and 622 to 642 (FWFWAIVAIAWGTIGSIVIIG).

This sequence belongs to the sodium:solute symporter (SSF) (TC 2.A.21) family. Expressed in root rhizodermis, including root hairs and cortex in more basal root zones. Expressed in shoots.

The protein resides in the cell membrane. Its function is as follows. High-affinity urea-proton symporter involved in the active transport of urea across the plasma membrane into root cells. May play an important role in urea uptake by plant cells at low external urea concentrations. The protein is Urea-proton symporter DUR3 (DUR3) of Arabidopsis thaliana (Mouse-ear cress).